The sequence spans 257 residues: NAD-capped RNA hydrolase NudC (257 aa).

Substrate is bound by residues Lys25 and Arg69. Positions 98 and 101 each coordinate Zn(2+). A substrate-binding site is contributed by Glu111. Zn(2+) contacts are provided by Cys116 and Cys119. Substrate is bound at residue Tyr124. Positions 125-248 (PQIAPCIIVA…TVARRLIEDT (124 aa)) constitute a Nudix hydrolase domain. 3 residues coordinate a divalent metal cation: Ala158, Glu174, and Glu178. Positions 159–180 (GFVEVGETLEQAVAREVMEESG) match the Nudix box motif. A substrate-binding site is contributed by 192-199 (QPWPFPQS). Glu219 serves as a coordination point for a divalent metal cation. A substrate-binding site is contributed by Ala241.

It belongs to the Nudix hydrolase family. NudC subfamily. As to quaternary structure, homodimer. Mg(2+) is required as a cofactor. Requires Mn(2+) as cofactor. It depends on Zn(2+) as a cofactor.

It carries out the reaction a 5'-end NAD(+)-phospho-ribonucleoside in mRNA + H2O = a 5'-end phospho-adenosine-phospho-ribonucleoside in mRNA + beta-nicotinamide D-ribonucleotide + 2 H(+). It catalyses the reaction NAD(+) + H2O = beta-nicotinamide D-ribonucleotide + AMP + 2 H(+). The catalysed reaction is NADH + H2O = reduced beta-nicotinamide D-ribonucleotide + AMP + 2 H(+). Functionally, mRNA decapping enzyme that specifically removes the nicotinamide adenine dinucleotide (NAD) cap from a subset of mRNAs by hydrolyzing the diphosphate linkage to produce nicotinamide mononucleotide (NMN) and 5' monophosphate mRNA. The NAD-cap is present at the 5'-end of some mRNAs and stabilizes RNA against 5'-processing. Has preference for mRNAs with a 5'-end purine. Catalyzes the hydrolysis of a broad range of dinucleotide pyrophosphates. This is NAD-capped RNA hydrolase NudC from Shigella flexneri.